A 179-amino-acid polypeptide reads, in one-letter code: ATP synthase subunit delta (179 aa).

It belongs to the ATPase delta chain family. As to quaternary structure, F-type ATPases have 2 components, F(1) - the catalytic core - and F(0) - the membrane proton channel. F(1) has five subunits: alpha(3), beta(3), gamma(1), delta(1), epsilon(1). F(0) has three main subunits: a(1), b(2) and c(10-14). The alpha and beta chains form an alternating ring which encloses part of the gamma chain. F(1) is attached to F(0) by a central stalk formed by the gamma and epsilon chains, while a peripheral stalk is formed by the delta and b chains.

It is found in the cell membrane. Its function is as follows. F(1)F(0) ATP synthase produces ATP from ADP in the presence of a proton or sodium gradient. F-type ATPases consist of two structural domains, F(1) containing the extramembraneous catalytic core and F(0) containing the membrane proton channel, linked together by a central stalk and a peripheral stalk. During catalysis, ATP synthesis in the catalytic domain of F(1) is coupled via a rotary mechanism of the central stalk subunits to proton translocation. Functionally, this protein is part of the stalk that links CF(0) to CF(1). It either transmits conformational changes from CF(0) to CF(1) or is implicated in proton conduction. The protein is ATP synthase subunit delta of Staphylococcus aureus (strain USA300 / TCH1516).